We begin with the raw amino-acid sequence, 80 residues long: Saposin-B-Val (80 aa).

The 80-residue stretch at 1-80 (GDVCQDCIQM…CGLVGFCEEV (80 aa)) folds into the Saposin B-type domain. Disulfide bonds link cysteine 4/cysteine 77, cysteine 7/cysteine 71, and cysteine 36/cysteine 47. An N-linked (GlcNAc...) (complex) asparagine glycan is attached at asparagine 21.

In terms of assembly, saposin-B is a homodimer. Interacts with GRN; facilitates lysosomal delivery of progranulin from the extracellular space and the biosynthetic pathway. The one residue extended Saposin-B-Val is only found in a minority of the chains.

Saposin-B stimulates the hydrolysis of galacto-cerebroside sulfate by arylsulfatase A (EC 3.1.6.8), GM1 gangliosides by beta-galactosidase (EC 3.2.1.23) and globotriaosylceramide by alpha-galactosidase A (EC 3.2.1.22). Saposin-B forms a solubilizing complex with the substrates of the sphingolipid hydrolases. This Sus scrofa (Pig) protein is Saposin-B-Val (PSAP).